The following is a 476-amino-acid chain: TOM1-like protein 1 (476 aa).

Residues 22 to 154 (ATFAGVQTED…DLVKKGVQFP (133 aa)) enclose the VHS domain. Residues 155–179 (PSEAEAETARQETAQISSNPPTSVP) form a disordered region. Positions 170 to 179 (ISSNPPTSVP) are enriched in polar residues. Ser171 carries the phosphoserine modification. In terms of domain architecture, GAT spans 200 to 288 (EQIGKLHSEL…AILGYERFTR (89 aa)). Polar residues predominate over residues 298-314 (KNQKEATNTTSEPSAPS). The interval 298–327 (KNQKEATNTTSEPSAPSQDLLDLSPSPRMP) is disordered. A phosphoserine mark is found at Ser314, Ser321, and Ser323. Residues 392 to 395 (YDNF) are interaction with GRB2. The SH3-binding motif lies at 421 to 425 (LPPLP). Positions 442–445 (YEVM) are interaction with PIK3R1. A Phosphotyrosine modification is found at Tyr460. Residues 460–463 (YEEI) carry the SH2-binding motif.

This sequence belongs to the TOM1 family. As to quaternary structure, interacts with FYN, GRB2 and PIK3R1 when phosphorylated. Interacts with LYN. Phosphorylated on tyrosines by FYN and LYN.

The protein localises to the golgi apparatus. It localises to the golgi stack. Its subcellular location is the endosome membrane. It is found in the cytoplasm. The protein resides in the membrane. Functionally, probable adapter protein involved in signaling pathways. Interacts with the SH2 and SH3 domains of various signaling proteins when it is phosphorylated. May promote FYN activation, possibly by disrupting intramolecular SH3-dependent interactions. The sequence is that of TOM1-like protein 1 (TOM1L1) from Homo sapiens (Human).